The primary structure comprises 500 residues: Prostacyclin synthase (500 aa).

Residues 1–20 traverse the membrane as a helical segment; the sequence is MSWAVVFGLLAALLLLLLLT. Substrate is bound by residues Arg-106, Leu-112, Asn-287, 358–359, and Arg-382; that span reads TR. A heme-binding site is contributed by Cys-441.

The protein belongs to the cytochrome P450 family. The cofactor is heme.

The protein localises to the endoplasmic reticulum membrane. The catalysed reaction is prostaglandin H2 = prostaglandin I2. It catalyses the reaction a hydroperoxyeicosatetraenoate = an oxoeicosatetraenoate + H2O. The enzyme catalyses (15S)-hydroperoxy-(5Z,8Z,11Z,13E)-eicosatetraenoate = 15-oxo-(5Z,8Z,11Z,13E)-eicosatetraenoate + H2O. It carries out the reaction (15S)-hydroperoxy-(5Z,8Z,11Z,13E)-eicosatetraenoate + AH2 = (15S)-hydroxy-(5Z,8Z,11Z,13E)-eicosatetraenoate + A + H2O. Its function is as follows. Catalyzes the biosynthesis and metabolism of eicosanoids. Catalyzes the isomerization of prostaglandin H2 to prostacyclin (= prostaglandin I2), a potent mediator of vasodilation and inhibitor of platelet aggregation. Additionally, displays dehydratase activity, toward hydroperoxyeicosatetraenoates (HPETEs), especially toward (15S)-hydroperoxy-(5Z,8Z,11Z,13E)-eicosatetraenoate (15(S)-HPETE). The sequence is that of Prostacyclin synthase (PTGIS) from Bos taurus (Bovine).